We begin with the raw amino-acid sequence, 325 residues long: MDLAAIYKSLLSLSPELPSDLGETESSTSWASSGPWSLSSSDSSLPEAAARLPGRSTSLVEGRSCGWVPPPPGFAPLAPRPSSELSPSPTSPTATPTTSSRYKTELCRTFSESGRCRYGAKCQFAHGLGELRQPSRHPKYKTELCHKFYLQGRCPYGSRCHFIHNPSEDLAAPGHPHVLRQSISFSGLPSGRRTSPPPASLAGPSVPSWSFSPSSSPPPPPGDLPLSPSAFSAAPGTPVSRRDPTPACCPSCRRATPNSVWGPVGGLARSPSAHSLGSDPDEYASSGSSLGGSDSPVFEAGVFGPPQPPAAPRRLPIFNRISVSE.

The interval Met-1–Pro-15 is necessary for nuclear export. A necessary and sufficient for the association with mRNA decay enzymes and mRNA decay activation region spans residues Met-1–Thr-98. 2 necessary for localization of ARE-containing mRNAs to processing bodies (PBs) regions span residues Met-1–Ala-172 and Thr-98–Glu-325. A compositionally biased stretch (low complexity) spans Pro-15 to Ala-48. The tract at residues Pro-15–Arg-101 is disordered. Ser-58 is modified (phosphoserine; by MAPKAPK2). Ser-64 bears the Phosphoserine mark. The stretch at Pro-69–Gly-73 is one P-P-P-P-G repeat. Low complexity predominate over residues Ala-75–Arg-101. Phosphoserine occurs at positions 86 and 88. Thr-90 is modified (phosphothreonine). Residue Ser-91 is modified to Phosphoserine. The interval Thr-93–Pro-166 is necessary for nuclear localization. A necessary for RNA-binding region spans residues Thr-95–Ala-171. 2 consecutive C3H1-type zinc fingers follow at residues Arg-101–Gly-129 and Lys-139–Ser-167. The necessary for interaction with PABPN1 stretch occupies residues Arg-101 to Arg-192. Residue Ser-167 is modified to Phosphoserine. Positions Ala-172 to Glu-325 are necessary for mRNA decay activation. Ser-184 carries the post-translational modification Phosphoserine; by MAPKAPK2. Disordered regions lie at residues Phe-185–Cys-248 and Val-260–Glu-325. Residue Ser-195 is modified to Phosphoserine. Residues Pro-196–Ser-200 form a P-P-P-P-G repeat. Low complexity predominate over residues Pro-204 to Ser-214. Ser-216 carries the post-translational modification Phosphoserine. The P-P-P-P-G repeat unit spans residues Pro-217–Gly-222. At Ser-227 the chain carries Phosphoserine; by MAPK1; in vitro. 3 positions are modified to phosphoserine: Ser-275, Ser-295, and Ser-322. The segment covering Ser-285–Ser-295 has biased composition (low complexity). The interaction with CNOT1 stretch occupies residues Ala-311 to Glu-325.

Associates with cytoplasmic CCR4-NOT and PAN2-PAN3 deadenylase complexes to trigger ARE-containing mRNA deadenylation and decay processes. Part of a mRNA decay activation complex at least composed of poly(A)-specific exoribonucleases CNOT6, EXOSC2 and XRN1 and mRNA-decapping enzymes DCP1A and DCP2. Associates with the RNA exosome complex. Interacts (via phosphorylated form) with 14-3-3 proteins; these interactions promote exclusion of ZFP36 from cytoplasmic stress granules in response to arsenite treatment in a MAPKAPK2-dependent manner and does not prevent CCR4-NOT deadenylase complex recruitment or ZFP36-induced ARE-containing mRNA deadenylation and decay processes. Interacts with 14-3-3 proteins; these interactions occur in response to rapamycin in an Akt-dependent manner. Interacts with AGO2 and AGO4. Interacts (via C-terminus) with CNOT1; this interaction occurs in a RNA-independent manner and induces mRNA deadenylation. Interacts (via N-terminus) with CNOT6. Interacts with CNOT6L. Interacts (via C-terminus) with CNOT7; this interaction occurs in a RNA-independent manner, induces mRNA deadenylation and is inhibited in a phosphorylation MAPKAPK2-dependent manner. Interacts (via unphosphorylated form) with CNOT8; this interaction occurs in a RNA-independent manner and is inhibited in a phosphorylation MAPKAPK2-dependent manner. Interacts with DCP1A. Interacts (via N-terminus) with DCP2. Interacts with EDC3. Interacts (via N-terminus) with EXOSC2. Interacts with heat shock 70 kDa proteins. Interacts with KHSRP; this interaction increases upon cytokine-induced treatment. Interacts with MAP3K4; this interaction enhances the association with SH3KBP1/CIN85. Interacts with MAPKAPK2; this interaction occurs upon skeletal muscle satellite cell activation. Interacts with NCL. Interacts with NUP214; this interaction increases upon lipopolysaccharide (LPS) stimulation. Interacts with PABPC1; this interaction occurs in a RNA-dependent manner. Interacts (via hypophosphorylated form) with PABPN1 (via RRM domain and C-terminal arginine-rich region); this interaction occurs in the nucleus in a RNA-independent manner, decreases in presence of single-stranded poly(A) RNA-oligomer and in a p38 MAPK-dependent-manner and inhibits nuclear poly(A) tail synthesis. Interacts with PAN2. Interacts (via C3H1-type zinc finger domains) with PKM. Interacts (via C3H1-type zinc finger domains) with nuclear RNA poly(A) polymerase. Interacts with PPP2CA; this interaction occurs in LPS-stimulated cells and induces ZFP36 dephosphorylation, and hence may promote ARE-containing mRNAs decay. Interacts (via C-terminus) with PRR5L (via C-terminus); this interaction may accelerate ZFP36-mediated mRNA decay during stress. Interacts (via C-terminus) with SFN; this interaction occurs in a phosphorylation-dependent manner. Interacts (via extreme C-terminal region) with SH3KBP1/CIN85 (via SH3 domains); this interaction enhances MAP3K4-induced phosphorylation of ZFP36 at Ser-64 and Ser-91 and does not alter neither ZFP36 binding to ARE-containing transcripts nor TNF-alpha mRNA decay. Interacts with XRN1. Interacts (via C-terminus and Ser-184 phosphorylated form) with YWHAB; this interaction occurs in a p38/MAPKAPK2-dependent manner, increases cytoplasmic localization of ZFP36 and protects ZFP36 from Ser-184 dephosphorylation by serine/threonine phosphatase 2A, and hence may be crucial for stabilizing ARE-containing mRNAs. Interacts (via phosphorylated form) with YWHAE. Interacts (via C-terminus) with YWHAG; this interaction occurs in a phosphorylation-dependent manner. Interacts with YWHAH; this interaction occurs in a phosphorylation-dependent manner. Interacts with YWHAQ; this interaction occurs in a phosphorylation-dependent manner. Interacts with (via C-terminus) YWHAZ; this interaction occurs in a phosphorylation-dependent manner. Does not interact with SH3KBP1. Interacts (via P-P-P-P-G repeats) with GIGYF2; the interaction is direct. Phosphorylated. Phosphorylation at serine and/or threonine residues occurs in a p38 MAPK- and MAPKAPK2-dependent manner. Phosphorylated by MAPKAPK2 at Ser-58 and Ser-184; phosphorylation increases its stability and cytoplasmic localization, promotes binding to 14-3-3 adapter proteins and inhibits the recruitment of cytoplasmic CCR4-NOT and PAN2-PAN3 deadenylase complexes to the mRNA decay machinery, thereby inhibiting ZFP36-induced ARE-containing mRNA deadenylation and decay processes. Phosphorylation by MAPKAPK2 does not impair ARE-containing RNA-binding. Phosphorylated in a MAPKAPK2- and p38 MAPK-dependent manner upon skeletal muscle satellite cell activation; this phosphorylation inhibits ZFP36-mediated mRNA decay activity, and hence stabilizes MYOD1 mRNA. Phosphorylated by MAPK1 upon mitogen stimulation. Phosphorylated at Ser-64 and Ser-91; these phosphorylations increase in a SH3KBP1-dependent manner. Phosphorylated at serine and threonine residues in a pyruvate kinase PKM- and p38 MAPK-dependent manner. Phosphorylation at Ser-58 may participate in the PKM-mediated degradation of ZFP36 in a p38 MAPK-dependent manner. Dephosphorylated by serine/threonine phosphatase 2A at Ser-184. In terms of processing, ubiquitinated; pyruvate kinase (PKM)-dependent ubiquitination leads to proteasomal degradation through a p38 MAPK signaling pathway.

The protein localises to the nucleus. The protein resides in the cytoplasm. Its subcellular location is the cytoplasmic granule. It is found in the P-body. In terms of biological role, zinc-finger RNA-binding protein that destabilizes numerous cytoplasmic AU-rich element (ARE)-containing mRNA transcripts by promoting their poly(A) tail removal or deadenylation, and hence provide a mechanism for attenuating protein synthesis. Acts as an 3'-untranslated region (UTR) ARE mRNA-binding adapter protein to communicate signaling events to the mRNA decay machinery. Recruits deadenylase CNOT7 (and probably the CCR4-NOT complex) via association with CNOT1, and hence promotes ARE-mediated mRNA deadenylation. Also functions by recruiting components of the cytoplasmic RNA decay machinery to the bound ARE-containing mRNAs. Self regulates by destabilizing its own mRNA. Binds to 3'-UTR ARE of numerous mRNAs. Also binds to ARE of its own mRNA. Plays a role in anti-inflammatory responses; suppresses tumor necrosis factor (TNF)-alpha production by stimulating ARE-mediated TNF-alpha mRNA decay and several other inflammatory ARE-containing mRNAs in interferon (IFN)- and/or lipopolysaccharide (LPS)-induced macrophages. Also plays a role in the regulation of dendritic cell maturation at the post-transcriptional level, and hence operates as part of a negative feedback loop to limit the inflammatory response. Promotes ARE-mediated mRNA decay of hypoxia-inducible factor HIF1A mRNA during the response of endothelial cells to hypoxia. Positively regulates early adipogenesis of preadipocytes by promoting ARE-mediated mRNA decay of immediate early genes (IEGs). Negatively regulates hematopoietic/erythroid cell differentiation by promoting ARE-mediated mRNA decay of the transcription factor STAT5B mRNA. Plays a role in maintaining skeletal muscle satellite cell quiescence by promoting ARE-mediated mRNA decay of the myogenic determination factor MYOD1 mRNA. Also associates with and regulates the expression of non-ARE-containing target mRNAs at the post-transcriptional level, such as MHC class I mRNAs. Participates in association with argonaute RISC catalytic components in the ARE-mediated mRNA decay mechanism; assists microRNA (miRNA) targeting ARE-containing mRNAs. May also play a role in the regulation of cytoplasmic mRNA decapping; enhances decapping of ARE-containing RNAs, in vitro. Involved in the delivery of target ARE-mRNAs to processing bodies (PBs). In addition to its cytosolic mRNA-decay function, affects nuclear pre-mRNA processing. Negatively regulates nuclear poly(A)-binding protein PABPN1-stimulated polyadenylation activity on ARE-containing pre-mRNA during LPS-stimulated macrophages. Also involved in the regulation of stress granule (SG) and P-body (PB) formation and fusion. Plays a role in the regulation of keratinocyte proliferation, differentiation and apoptosis. Plays a role as a tumor suppressor by inhibiting cell proliferation in breast cancer cells. This chain is mRNA decay activator protein ZFP36, found in Ovis aries (Sheep).